A 254-amino-acid chain; its full sequence is Type III pantothenate kinase (254 aa).

6 to 13 (DVGNTNTT) is a binding site for ATP. Residues Y100 and 107–110 (GADR) contribute to the substrate site. The active-site Proton acceptor is D109. D129 is a binding site for K(+). Residue T132 coordinates ATP. T184 is a substrate binding site.

Belongs to the type III pantothenate kinase family. Homodimer. NH4(+) serves as cofactor. Requires K(+) as cofactor.

It localises to the cytoplasm. It carries out the reaction (R)-pantothenate + ATP = (R)-4'-phosphopantothenate + ADP + H(+). It participates in cofactor biosynthesis; coenzyme A biosynthesis; CoA from (R)-pantothenate: step 1/5. Catalyzes the phosphorylation of pantothenate (Pan), the first step in CoA biosynthesis. The polypeptide is Type III pantothenate kinase (Anaeromyxobacter dehalogenans (strain 2CP-C)).